The following is a 284-amino-acid chain: MKKIAIFAKVHDPRCQGVASELIAWLEARGLIPLVEAHLARHLGGRQGIVPEDIPVLADMAVVLGGDGTLISAARLIGSRQIPILGVNLGSLGFLTEITLDELYPVLESCLSGDFQVTERMMLTVSVERNGEEICSHRVLNDVVINKGALARIIDMETEVSGIRLTTYKADGLIISTPTGSTGYSLSANGPIVHPSLECITITPICPHTLTNRPIVLESSSGVTVWLRSKDEDVYLTLDGQVGMELKCGDAVHVRRAAHRTRLVMSRSRNYFEVLRTKLKWGER.

Asp67 (proton acceptor) is an active-site residue. NAD(+)-binding positions include Asp67–Gly68, Asn141–Asp142, Arg152, Lys169, Asp171, Thr182–Ser187, and Gln241.

The protein belongs to the NAD kinase family. A divalent metal cation is required as a cofactor.

The protein resides in the cytoplasm. The enzyme catalyses NAD(+) + ATP = ADP + NADP(+) + H(+). Its function is as follows. Involved in the regulation of the intracellular balance of NAD and NADP, and is a key enzyme in the biosynthesis of NADP. Catalyzes specifically the phosphorylation on 2'-hydroxyl of the adenosine moiety of NAD to yield NADP. The protein is NAD kinase of Geobacter sulfurreducens (strain ATCC 51573 / DSM 12127 / PCA).